A 349-amino-acid polypeptide reads, in one-letter code: Phosphate acyltransferase (349 aa).

It belongs to the PlsX family. Homodimer. Probably interacts with PlsY.

Its subcellular location is the cytoplasm. It carries out the reaction a fatty acyl-[ACP] + phosphate = an acyl phosphate + holo-[ACP]. It functions in the pathway lipid metabolism; phospholipid metabolism. Its function is as follows. Catalyzes the reversible formation of acyl-phosphate (acyl-PO(4)) from acyl-[acyl-carrier-protein] (acyl-ACP). This enzyme utilizes acyl-ACP as fatty acyl donor, but not acyl-CoA. This chain is Phosphate acyltransferase, found in Albidiferax ferrireducens (strain ATCC BAA-621 / DSM 15236 / T118) (Rhodoferax ferrireducens).